Reading from the N-terminus, the 591-residue chain is Metalloendopeptidase OPG085 (591 aa).

Residue His41 coordinates Zn(2+). Glu44 is an active-site residue. Zn(2+) contacts are provided by His45 and Glu112.

It belongs to the peptidase M44 family. The cofactor is Zn(2+). Undergoes proteolytic processing during the course of infection. May be cleaved into 46 kDa and 22 kDa products (Potential).

The protein localises to the virion. In terms of biological role, probably involved in maturation of some viral proteins by processing them preferentially at Ala-Gly-|-Ser/Thr/Lys motifs. Does not seem to be responsible for the cleavage of major core proteins. The polypeptide is Metalloendopeptidase OPG085 (OPG085) (Variola virus (isolate Human/India/Ind3/1967) (VARV)).